Consider the following 513-residue polypeptide: GMP synthase [glutamine-hydrolyzing] (513 aa).

Residues 7 to 197 (TILVLDFGGQ…LFGVCGCTGE (191 aa)) form the Glutamine amidotransferase type-1 domain. The active-site Nucleophile is Cys84. Catalysis depends on residues His171 and Glu173. The GMPS ATP-PPase domain maps to 198-387 (WTMENFIEEQ…LGLPEDIVWR (190 aa)). 225-231 (SGGVDSS) serves as a coordination point for ATP.

In terms of assembly, homodimer.

It catalyses the reaction XMP + L-glutamine + ATP + H2O = GMP + L-glutamate + AMP + diphosphate + 2 H(+). It functions in the pathway purine metabolism; GMP biosynthesis; GMP from XMP (L-Gln route): step 1/1. Catalyzes the synthesis of GMP from XMP. The sequence is that of GMP synthase [glutamine-hydrolyzing] from Heliobacterium modesticaldum (strain ATCC 51547 / Ice1).